The chain runs to 494 residues: UPF0371 protein M28_Spy1076 (494 aa).

It belongs to the UPF0371 family.

This chain is UPF0371 protein M28_Spy1076, found in Streptococcus pyogenes serotype M28 (strain MGAS6180).